A 281-amino-acid chain; its full sequence is ATP synthase gamma chain (281 aa).

It belongs to the ATPase gamma chain family. F-type ATPases have 2 components, CF(1) - the catalytic core - and CF(0) - the membrane proton channel. CF(1) has five subunits: alpha(3), beta(3), gamma(1), delta(1), epsilon(1). CF(0) has three main subunits: a, b and c.

Its subcellular location is the cell inner membrane. Its function is as follows. Produces ATP from ADP in the presence of a proton gradient across the membrane. The gamma chain is believed to be important in regulating ATPase activity and the flow of protons through the CF(0) complex. The sequence is that of ATP synthase gamma chain from Ehrlichia canis (strain Jake).